The following is a 375-amino-acid chain: MSCPVIELTQQLIRRPSLSPDDAGCQALMIERLRAIGFTVERMDFGDTQNFWAWRGQGETLAFAGHTDVVPAGDADRWINPPFEPTIRDGMLFGRGAADMKGSLAAMVVAAERFVAQHPNHKNRLAFLITSDEEASAKNGTVRVVETLMERHERLDYCLVGEPSSTEVVGDVVKNGRRGSLTCNLTIHGVQGHVAYPHLADNPVHRAAPMLNELVNIEWDKGNEFFPPTSMQIANLQAGTGSNNVIPGDFSVQFNFRFSTELTDEMIKSRVVALLEKYELRYSVDWWLSGQPFLTQRGKLVDAVVNAIAHYNEIKPQLLTTGGTSDGRFIARMGAQVVELGPVNATIHKINECVNAADLQLLARMYQRIMEQLVA.

Histidine 66 provides a ligand contact to Zn(2+). Aspartate 68 is a catalytic residue. A Zn(2+)-binding site is contributed by aspartate 99. The active-site Proton acceptor is the glutamate 133. Zn(2+)-binding residues include glutamate 134, glutamate 162, and histidine 348.

The protein belongs to the peptidase M20A family. DapE subfamily. In terms of assembly, homodimer. Requires Zn(2+) as cofactor. Co(2+) is required as a cofactor.

The catalysed reaction is N-succinyl-(2S,6S)-2,6-diaminopimelate + H2O = (2S,6S)-2,6-diaminopimelate + succinate. It functions in the pathway amino-acid biosynthesis; L-lysine biosynthesis via DAP pathway; LL-2,6-diaminopimelate from (S)-tetrahydrodipicolinate (succinylase route): step 3/3. In terms of biological role, catalyzes the hydrolysis of N-succinyl-L,L-diaminopimelic acid (SDAP), forming succinate and LL-2,6-diaminopimelate (DAP), an intermediate involved in the bacterial biosynthesis of lysine and meso-diaminopimelic acid, an essential component of bacterial cell walls. This Enterobacter sp. (strain 638) protein is Succinyl-diaminopimelate desuccinylase.